The chain runs to 647 residues: Chaperone protein DnaK (647 aa).

A Phosphothreonine; by autocatalysis modification is found at Thr-198. The segment at 603 to 647 (EQAQGAGGAQGFDPNAFQGGDAGQQQKADDGVVDAEFTEVKDDKK) is disordered. Residues 618-628 (AFQGGDAGQQQ) show a composition bias toward low complexity.

The protein belongs to the heat shock protein 70 family.

Functionally, acts as a chaperone. In Acinetobacter baylyi (strain ATCC 33305 / BD413 / ADP1), this protein is Chaperone protein DnaK.